A 484-amino-acid chain; its full sequence is UDP-N-acetylmuramate--L-alanine ligase (484 aa).

ATP is bound at residue G124–T130.

The protein belongs to the MurCDEF family.

It localises to the cytoplasm. The enzyme catalyses UDP-N-acetyl-alpha-D-muramate + L-alanine + ATP = UDP-N-acetyl-alpha-D-muramoyl-L-alanine + ADP + phosphate + H(+). Its pathway is cell wall biogenesis; peptidoglycan biosynthesis. Cell wall formation. The polypeptide is UDP-N-acetylmuramate--L-alanine ligase (Pseudoalteromonas atlantica (strain T6c / ATCC BAA-1087)).